We begin with the raw amino-acid sequence, 264 residues long: MQELKDTQSEADTRNISIDRVGVKGLRFPIQIQDKLNRIQSTVATVSLAVDLPEEFKGTHMSRFVEALHQHGPLLDVHTALAIPRELLRRLSARRSHVEMEFPFFRSKNAPVTGIEGLMDYVVRFEMEAEANNKLADFKLTVIVPVTTLCPCSKAMSAYGAHNQRGLVTYSVRFASRPVWIEDLIDLVESCASCSLFSVLKRPDEKWVTEKAYENPVFVEDLVRNVALKTQSHSAFSWYRVEAENFESIHNHQAYAVIERDLRS.

The protein belongs to the GTP cyclohydrolase IV family.

The catalysed reaction is GTP + H2O = 7,8-dihydroneopterin 3'-triphosphate + formate + H(+). The protein operates within cofactor biosynthesis; 7,8-dihydroneopterin triphosphate biosynthesis; 7,8-dihydroneopterin triphosphate from GTP: step 1/1. Its function is as follows. Converts GTP to 7,8-dihydroneopterin triphosphate. This is GTP cyclohydrolase FolE2 from Akkermansia muciniphila (strain ATCC BAA-835 / DSM 22959 / JCM 33894 / BCRC 81048 / CCUG 64013 / CIP 107961 / Muc).